Here is a 1396-residue protein sequence, read N- to C-terminus: Sterol 3-beta-glucosyltransferase (1396 aa).

Over residues 1–16 (MRPLLDEAKRRVDRRL) the composition is skewed to basic and acidic residues. Disordered stretches follow at residues 1–59 (MRPL…TKEG), 82–193 (HARF…AAPV), and 206–233 (SKGS…TSAS). Residues 18-28 (ASRQSLSTSRI) are compositionally biased toward polar residues. 2 stretches are compositionally biased toward basic and acidic residues: residues 35–44 (ERLKDDHDAQ) and 82–108 (HARF…KESQ). The segment covering 156 to 175 (GSSQRQGGAQTEPSTGNQMS) has biased composition (polar residues). In terms of domain architecture, GRAM 1 spans 237-288 (LRLMEMFGFESPEKVLVEYACSLVQSMLLQGYMYVTEGHICFYAYLPRKSTV). The PH domain maps to 289–387 (AIKSGYLYKR…WVKSLQKVIF (99 aa)). Composition is skewed to polar residues over residues 459–479 (QAKN…QSRA) and 487–497 (SLTSGLSQVLG). Disordered regions lie at residues 459–531 (QAKN…RDLS) and 576–635 (FRRQ…VQQS). Residues 585-595 (QFGRRHSDETA) show a composition bias toward basic and acidic residues. A GRAM 2 domain is found at 719–785 (DRFRAHFALP…KDVENVEKEK (67 aa)). The segment at 841-880 (EQDESEAAKAEHRMLQEARKDASGGLIPQTPSDESPEIHP) is disordered. Residues 846 to 862 (EAAKAEHRMLQEARKDA) show a composition bias toward basic and acidic residues. UDP-alpha-D-glucose is bound by residues Ser907, Arg908, Asp910, Ala1210, His1212, His1225, Gly1229, Thr1230, Asp1249, and Gln1250.

It belongs to the glycosyltransferase 28 family.

The protein resides in the cytoplasm. The protein localises to the preautophagosomal structure membrane. The catalysed reaction is a sterol + UDP-alpha-D-glucose = a sterol 3-beta-D-glucoside + UDP + H(+). The enzyme catalyses ergosterol + UDP-alpha-D-glucose = ergosteryl 3-beta-D-glucoside + UDP + H(+). Sterol glycosyltransferase responsible for the glycosylation of ergosterol to form ergosterol-glucoside. The protein is Sterol 3-beta-glucosyltransferase of Aspergillus terreus (strain NIH 2624 / FGSC A1156).